The primary structure comprises 532 residues: 2,3-bisphosphoglycerate-independent phosphoglycerate mutase (532 aa).

Mn(2+) is bound by residues D15 and S65. Residue S65 is the Phosphoserine intermediate of the active site. Residues H126, 156–157, R188, R194, 258–261, and K331 each bind substrate; these read RD and RPDR. 5 residues coordinate Mn(2+): D398, H402, D439, H440, and H457.

It belongs to the BPG-independent phosphoglycerate mutase family. In terms of assembly, monomer. Requires Mn(2+) as cofactor.

It catalyses the reaction (2R)-2-phosphoglycerate = (2R)-3-phosphoglycerate. Its pathway is carbohydrate degradation; glycolysis; pyruvate from D-glyceraldehyde 3-phosphate: step 3/5. Catalyzes the interconversion of 2-phosphoglycerate and 3-phosphoglycerate. In Microcystis aeruginosa (strain NIES-843 / IAM M-2473), this protein is 2,3-bisphosphoglycerate-independent phosphoglycerate mutase.